Consider the following 192-residue polypeptide: Fe/S biogenesis protein NfuA (192 aa).

Cysteine 149 and cysteine 152 together coordinate [4Fe-4S] cluster.

This sequence belongs to the NfuA family. In terms of assembly, homodimer. [4Fe-4S] cluster serves as cofactor.

Its function is as follows. Involved in iron-sulfur cluster biogenesis. Binds a 4Fe-4S cluster, can transfer this cluster to apoproteins, and thereby intervenes in the maturation of Fe/S proteins. Could also act as a scaffold/chaperone for damaged Fe/S proteins. The sequence is that of Fe/S biogenesis protein NfuA from Shewanella amazonensis (strain ATCC BAA-1098 / SB2B).